The primary structure comprises 182 residues: Heat shock protein beta-2 (182 aa).

A sHSP domain is found at 55–163 (RAGEGGRAGA…DTEVNEVYIS (109 aa)).

It belongs to the small heat shock protein (HSP20) family. In terms of assembly, interacts with DMPK; may enhance its kinase activity.

Its subcellular location is the cytoplasm. The protein localises to the nucleus. Functionally, may regulate the kinase DMPK. The protein is Heat shock protein beta-2 (Hspb2) of Rattus norvegicus (Rat).